The following is a 336-amino-acid chain: MFPTRVLRSTLQKLPHRETVPMAYDLHMPQRSLFQNLNEKHTEPIVFLHGIFGSKKSYELDSKMIAHGTHTPVYTVDIRNHGQTSHAMPFNYDTLAQDVKEFCHVQGLKSVKLVGYSLGAKISMLAALKYPELVKSAVIIDNAPVKQPYIELYMKQYVKSMLHVLEEAKIKTTDKDWKNKASDAMKKFLPNGVIRKNLLVNLVNKKPDGFESPVVNFDEGLIQFLNPIRQMEEAAVKDVTDWPEESTEGLKYNGPVKFIKGLKSPFINEEGMTKIQDIFPNNEFANVNSSHDILDQRPTEYVKIICDFFNAHRYESAPSNTIIGHKDFKTTIDMRV.

Residues 1 to 14 (MFPTRVLRSTLQKL) constitute a mitochondrion transit peptide. Residues 44–296 (PIVFLHGIFG…VNSSHDILDQ (253 aa)) form the AB hydrolase-1 domain. Residues S117, D141, and H291 each act as charge relay system in the active site.

Belongs to the AB hydrolase superfamily.

Its subcellular location is the mitochondrion. The enzyme catalyses ethanol + acetyl-CoA = ethyl acetate + CoA. It catalyses the reaction acetyl-CoA + H2O = acetate + CoA + H(+). The catalysed reaction is ethyl acetate + H2O = ethanol + acetate + H(+). Functionally, alcohol acetyltransferase that catalyzes the synthesis of ethyl acetate from ethanol and acetyl-CoA. Can also function as a thioesterase by hydrolyzing acetyl-CoA in the absence of ethanol, as well as esterase hydrolyzing ethyl acetate. In Cyberlindnera jadinii (strain ATCC 18201 / CBS 1600 / BCRC 20928 / JCM 3617 / NBRC 0987 / NRRL Y-1542) (Torula yeast), this protein is Ethanol acetyltransferase 1 (EAT1).